Consider the following 421-residue polypeptide: Lipid II:glycine glycyltransferase (421 aa).

Belongs to the FemABX family. In terms of assembly, monomer.

The protein localises to the cytoplasm. It catalyses the reaction beta-D-GlcNAc-(1-&gt;4)-Mur2Ac(oyl-L-Ala-D-isoglutaminyl-L-Lys-D-Ala-D-Ala)-di-trans,octa-cis-undecaprenyl diphosphate + glycyl-tRNA(Gly) = beta-D-GlcNAc-(1-&gt;4)-Mur2Ac(oyl-L-Ala-D-isoglutaminyl-L-Lys-(N(6)-Gly)-D-Ala-D-Ala)-di-trans,octa-cis-undecaprenyl diphosphate + tRNA(Gly) + H(+). Functionally, catalyzes the incorporation of the first glycine of the pentaglycine interpeptide bridge, which is characteristic of the S.aureus peptidoglycan. This glycine is added to the epsilon-amino group of the L-lysine of the membrane-bound lipid II intermediate (GlcNAc-(beta-1,4)-N-acetylmuramic acid(-L-Ala-D-iGln-L-Lys-D-Ala-D-Ala)-pyrophosphoryl-undecaprenol), using glycyl-tRNA(Gly) as donor, in a ribosome-independent mechanism. Involved in methicillin resistance. The sequence is that of Lipid II:glycine glycyltransferase (femX) from Staphylococcus aureus (strain Mu50 / ATCC 700699).